Here is a 210-residue protein sequence, read N- to C-terminus: Na(+)-translocating NADH-quinone reductase subunit D (210 aa).

6 consecutive transmembrane segments (helical) span residues 10–30 (VLIGPIVSNNPIALQILGVCS), 42–62 (LVMTIALTAVCALSNLFISLI), 72–92 (IIVQMTIIASLVIVVDQVLQA), 103–123 (VFVGLIITNCIVMGRAEAYAM), 131–151 (FMDGIGNGLGYGAILLSVGFV), and 178–198 (NGLLLLPPSAFFLIGALIWII).

The protein belongs to the NqrDE/RnfAE family. As to quaternary structure, composed of six subunits; NqrA, NqrB, NqrC, NqrD, NqrE and NqrF.

The protein resides in the cell inner membrane. It catalyses the reaction a ubiquinone + n Na(+)(in) + NADH + H(+) = a ubiquinol + n Na(+)(out) + NAD(+). In terms of biological role, NQR complex catalyzes the reduction of ubiquinone-1 to ubiquinol by two successive reactions, coupled with the transport of Na(+) ions from the cytoplasm to the periplasm. NqrA to NqrE are probably involved in the second step, the conversion of ubisemiquinone to ubiquinol. The polypeptide is Na(+)-translocating NADH-quinone reductase subunit D (Shewanella pealeana (strain ATCC 700345 / ANG-SQ1)).